The primary structure comprises 495 residues: Geraniol 8-hydroxylase (495 aa).

The chain crosses the membrane as a helical span at residues 5–25 (FLTIAIGFLFTITLYQALNFF). C438 lines the heme pocket.

This sequence belongs to the cytochrome P450 family. The cofactor is heme. In terms of tissue distribution, expressed in leaves, stems and roots.

It is found in the endoplasmic reticulum membrane. It carries out the reaction (2E)-geraniol + reduced [NADPH--hemoprotein reductase] + O2 = (6E)-8-hydroxygeraniol + oxidized [NADPH--hemoprotein reductase] + H2O + H(+). In terms of biological role, hydroxylase involved in the biosynthesis of hydroxygeraniol, a precursor of the iridoid monoterpenoid swertiamarin. In Swertia mussotii (Felwort), this protein is Geraniol 8-hydroxylase (CYP76B10).